Consider the following 859-residue polypeptide: Villin-like protein (859 aa).

Gelsolin-like repeat units lie at residues 24-76 (LKML…EARE), 148-188 (VSAT…SEKA), 264-308 (LVVQ…QEKK), 401-450 (LQRQ…EDTK), 521-561 (TRTM…DQRE), and 624-665 (LVLT…WKKE). The 67-residue stretch at 793-859 (SMVNGSLPRE…QQAKKKLGFF (67 aa)) folds into the HP domain.

This sequence belongs to the villin/gelsolin family.

In terms of biological role, possible tumor suppressor. The sequence is that of Villin-like protein from Mus musculus (Mouse).